Here is a 436-residue protein sequence, read N- to C-terminus: Glutamyl-tRNA reductase (436 aa).

Substrate-binding positions include 49–52 (TCNR), Ser118, 123–125 (EPQ), and Gln129. Cys50 (nucleophile) is an active-site residue. Position 203-208 (203-208 (GAGETI)) interacts with NADP(+).

It belongs to the glutamyl-tRNA reductase family. In terms of assembly, homodimer.

It catalyses the reaction (S)-4-amino-5-oxopentanoate + tRNA(Glu) + NADP(+) = L-glutamyl-tRNA(Glu) + NADPH + H(+). It functions in the pathway porphyrin-containing compound metabolism; protoporphyrin-IX biosynthesis; 5-aminolevulinate from L-glutamyl-tRNA(Glu): step 1/2. In terms of biological role, catalyzes the NADPH-dependent reduction of glutamyl-tRNA(Glu) to glutamate 1-semialdehyde (GSA). The polypeptide is Glutamyl-tRNA reductase (Actinobacillus pleuropneumoniae serotype 7 (strain AP76)).